The primary structure comprises 162 residues: uncharacterized protein (162 aa).

The first 34 residues, 1–34 (MRKKNNIKKWLLIIAGFLIICIITLFVMVSGNKV), serve as a signal peptide directing secretion.

This is an uncharacterized protein from Bacillus subtilis (strain 168).